Reading from the N-terminus, the 21-residue chain is IIGPVLGMVGSALGGLLKKIG.

A D-allo-isoleucine; in form H3 modification is found at isoleucine 2. At isoleucine 20 the chain carries Isoleucine amide.

It belongs to the bombinin family. In terms of tissue distribution, expressed by the skin glands.

The protein localises to the secreted. In terms of biological role, has antimicrobial and hemolytic activities. This Bombina variegata (Yellow-bellied toad) protein is Bombinin-H1/H3.